A 564-amino-acid polypeptide reads, in one-letter code: Proline--tRNA ligase (564 aa).

The protein belongs to the class-II aminoacyl-tRNA synthetase family. ProS type 1 subfamily. Homodimer.

The protein resides in the cytoplasm. It catalyses the reaction tRNA(Pro) + L-proline + ATP = L-prolyl-tRNA(Pro) + AMP + diphosphate. Catalyzes the attachment of proline to tRNA(Pro) in a two-step reaction: proline is first activated by ATP to form Pro-AMP and then transferred to the acceptor end of tRNA(Pro). As ProRS can inadvertently accommodate and process non-cognate amino acids such as alanine and cysteine, to avoid such errors it has two additional distinct editing activities against alanine. One activity is designated as 'pretransfer' editing and involves the tRNA(Pro)-independent hydrolysis of activated Ala-AMP. The other activity is designated 'posttransfer' editing and involves deacylation of mischarged Ala-tRNA(Pro). The misacylated Cys-tRNA(Pro) is not edited by ProRS. In Xanthomonas oryzae pv. oryzae (strain KACC10331 / KXO85), this protein is Proline--tRNA ligase.